The primary structure comprises 448 residues: Glutamyl-tRNA reductase (448 aa).

Substrate is bound by residues 49–52 (TCNR), S109, 114–116 (ETQ), and Q120. Catalysis depends on C50, which acts as the Nucleophile. 189-194 (GAGEMS) contributes to the NADP(+) binding site.

This sequence belongs to the glutamyl-tRNA reductase family. As to quaternary structure, homodimer.

The catalysed reaction is (S)-4-amino-5-oxopentanoate + tRNA(Glu) + NADP(+) = L-glutamyl-tRNA(Glu) + NADPH + H(+). It participates in porphyrin-containing compound metabolism; protoporphyrin-IX biosynthesis; 5-aminolevulinate from L-glutamyl-tRNA(Glu): step 1/2. Catalyzes the NADPH-dependent reduction of glutamyl-tRNA(Glu) to glutamate 1-semialdehyde (GSA). This is Glutamyl-tRNA reductase from Staphylococcus haemolyticus (strain JCSC1435).